A 234-amino-acid chain; its full sequence is tRNA1(Val) (adenine(37)-N6)-methyltransferase (234 aa).

Belongs to the methyltransferase superfamily. tRNA (adenine-N(6)-)-methyltransferase family.

It localises to the cytoplasm. It carries out the reaction adenosine(37) in tRNA1(Val) + S-adenosyl-L-methionine = N(6)-methyladenosine(37) in tRNA1(Val) + S-adenosyl-L-homocysteine + H(+). Functionally, specifically methylates the adenine in position 37 of tRNA(1)(Val) (anticodon cmo5UAC). The protein is tRNA1(Val) (adenine(37)-N6)-methyltransferase of Flavobacterium psychrophilum (strain ATCC 49511 / DSM 21280 / CIP 103535 / JIP02/86).